Here is a 398-residue protein sequence, read N- to C-terminus: Selenide, water dikinase (398 aa).

The disordered stretch occupies residues methionine 1 to threonine 21. Cysteine 46 is an active-site residue. Residues lysine 49, glycine 72–aspartate 74, aspartate 97, aspartate 120, and glycine 171–threonine 174 contribute to the ATP site. A Mg(2+)-binding site is contributed by aspartate 74. Residue aspartate 120 participates in Mg(2+) binding. Aspartate 278 is a Mg(2+) binding site.

It belongs to the selenophosphate synthase 1 family. Class I subfamily. As to quaternary structure, homodimer. Mg(2+) serves as cofactor.

It catalyses the reaction hydrogenselenide + ATP + H2O = selenophosphate + AMP + phosphate + 2 H(+). Synthesizes selenophosphate from selenide and ATP. The polypeptide is Selenide, water dikinase (Leishmania major).